A 216-amino-acid chain; its full sequence is DNA replication complex GINS protein PSF3 (216 aa).

The tract at residues 1 to 16 (MSEAYFRVESGALGPE) is not essential for folding and stability of GINS complex, but may regulate accessibility to the central complex pore.

This sequence belongs to the GINS3/PSF3 family. In terms of assembly, component of the GINS complex which is a heterotetramer of GINS1, GINS2, GINS3 and GINS4. Forms a stable subcomplex with GINS2. GINS complex interacts with DNA primase in vitro. Component of the CMG helicase complex, a hexameric ring of related MCM2-7 subunits stabilized by CDC45 and the tetrameric GINS complex.

Its subcellular location is the nucleus. The protein localises to the chromosome. Functionally, required for correct functioning of the GINS complex, a complex that plays an essential role in the initiation of DNA replication, and progression of DNA replication forks. GINS complex is a core component of CDC45-MCM-GINS (CMG) helicase, the molecular machine that unwinds template DNA during replication, and around which the replisome is built. The sequence is that of DNA replication complex GINS protein PSF3 (GINS3) from Bos taurus (Bovine).